We begin with the raw amino-acid sequence, 619 residues long: UPF0329 protein ECU08_2070 (619 aa).

Basic and acidic residues-rich tracts occupy residues 350-359 (EREKREESKG) and 369-385 (GAGEAKEESKEEDRKEE). The interval 350–425 (EREKREESKG…REKKMGEEHH (76 aa)) is disordered. Positions 386 to 396 (EGVEVEEEESA) are enriched in acidic residues.

The protein belongs to the UPF0329 family.

The polypeptide is UPF0329 protein ECU08_2070 (Encephalitozoon cuniculi (strain GB-M1) (Microsporidian parasite)).